The sequence spans 411 residues: Serine hydroxymethyltransferase (411 aa).

Residues leucine 117 and 121-123 (GHL) each bind (6S)-5,6,7,8-tetrahydrofolate. Residue lysine 226 is modified to N6-(pyridoxal phosphate)lysine. (6S)-5,6,7,8-tetrahydrofolate is bound by residues glutamate 241 and 349–351 (SPF).

It belongs to the SHMT family. As to quaternary structure, homodimer. Pyridoxal 5'-phosphate is required as a cofactor.

The protein localises to the cytoplasm. It catalyses the reaction (6R)-5,10-methylene-5,6,7,8-tetrahydrofolate + glycine + H2O = (6S)-5,6,7,8-tetrahydrofolate + L-serine. Its pathway is one-carbon metabolism; tetrahydrofolate interconversion. It participates in amino-acid biosynthesis; glycine biosynthesis; glycine from L-serine: step 1/1. Its function is as follows. Catalyzes the reversible interconversion of serine and glycine with tetrahydrofolate (THF) serving as the one-carbon carrier. This reaction serves as the major source of one-carbon groups required for the biosynthesis of purines, thymidylate, methionine, and other important biomolecules. Also exhibits THF-independent aldolase activity toward beta-hydroxyamino acids, producing glycine and aldehydes, via a retro-aldol mechanism. The protein is Serine hydroxymethyltransferase of Macrococcus caseolyticus (strain JCSC5402) (Macrococcoides caseolyticum).